The sequence spans 282 residues: HTH-type transcriptional activator RhaR (282 aa).

One can recognise an HTH araC/xylS-type domain in the interval 179-277 (DKLITRLAAS…GMTPSQWRHL (99 aa)). DNA-binding regions (H-T-H motif) lie at residues 196–217 (DKFC…RQQT) and 244–267 (ISDI…TRET).

In terms of assembly, binds DNA as a dimer.

Its subcellular location is the cytoplasm. Functionally, activates expression of the rhaSR operon in response to L-rhamnose. The chain is HTH-type transcriptional activator RhaR from Shigella flexneri serotype 5b (strain 8401).